The primary structure comprises 186 residues: Protein GrpE (186 aa).

Residues 1 to 15 (MADEQQTLDQQTPEQ) show a composition bias toward polar residues. Residues 1-20 (MADEQQTLDQQTPEQPTGAA) are disordered.

The protein belongs to the GrpE family. In terms of assembly, homodimer.

It is found in the cytoplasm. Participates actively in the response to hyperosmotic and heat shock by preventing the aggregation of stress-denatured proteins, in association with DnaK and GrpE. It is the nucleotide exchange factor for DnaK and may function as a thermosensor. Unfolded proteins bind initially to DnaJ; upon interaction with the DnaJ-bound protein, DnaK hydrolyzes its bound ATP, resulting in the formation of a stable complex. GrpE releases ADP from DnaK; ATP binding to DnaK triggers the release of the substrate protein, thus completing the reaction cycle. Several rounds of ATP-dependent interactions between DnaJ, DnaK and GrpE are required for fully efficient folding. The chain is Protein GrpE from Pseudomonas aeruginosa (strain LESB58).